Reading from the N-terminus, the 190-residue chain is Elongation factor P-like protein (190 aa).

Belongs to the elongation factor P family.

The chain is Elongation factor P-like protein from Erwinia tasmaniensis (strain DSM 17950 / CFBP 7177 / CIP 109463 / NCPPB 4357 / Et1/99).